The chain runs to 322 residues: N-acetyl-gamma-glutamyl-phosphate reductase (322 aa).

Cys-132 is an active-site residue.

Belongs to the NAGSA dehydrogenase family. Type 1 subfamily.

The protein resides in the cytoplasm. It carries out the reaction N-acetyl-L-glutamate 5-semialdehyde + phosphate + NADP(+) = N-acetyl-L-glutamyl 5-phosphate + NADPH + H(+). The protein operates within amino-acid biosynthesis; L-arginine biosynthesis; N(2)-acetyl-L-ornithine from L-glutamate: step 3/4. Catalyzes the NADPH-dependent reduction of N-acetyl-5-glutamyl phosphate to yield N-acetyl-L-glutamate 5-semialdehyde. The sequence is that of N-acetyl-gamma-glutamyl-phosphate reductase from Bacteroides thetaiotaomicron (strain ATCC 29148 / DSM 2079 / JCM 5827 / CCUG 10774 / NCTC 10582 / VPI-5482 / E50).